The sequence spans 155 residues: uncharacterized protein (155 aa).

Disordered stretches follow at residues 24–63 (RVGY…VVLK) and 80–155 (KAAK…DENE). Ser-50 carries the phosphoserine modification. N6-acetyllysine is present on Lys-108. Polar residues predominate over residues 128–147 (KQSSVRKNSQKQIKNSSLLS). Ser-130, Ser-147, and Ser-150 each carry phosphoserine.

This is an uncharacterized protein from Mus musculus (Mouse).